The sequence spans 189 residues: Peptidyl-tRNA hydrolase (189 aa).

Y15 lines the tRNA pocket. H20 functions as the Proton acceptor in the catalytic mechanism. The tRNA site is built by F64 and N66.

The protein belongs to the PTH family. In terms of assembly, monomer.

The protein resides in the cytoplasm. It carries out the reaction an N-acyl-L-alpha-aminoacyl-tRNA + H2O = an N-acyl-L-amino acid + a tRNA + H(+). In terms of biological role, hydrolyzes ribosome-free peptidyl-tRNAs (with 1 or more amino acids incorporated), which drop off the ribosome during protein synthesis, or as a result of ribosome stalling. Catalyzes the release of premature peptidyl moieties from peptidyl-tRNA molecules trapped in stalled 50S ribosomal subunits, and thus maintains levels of free tRNAs and 50S ribosomes. This is Peptidyl-tRNA hydrolase from Persephonella marina (strain DSM 14350 / EX-H1).